The primary structure comprises 417 residues: UDP-N-acetylglucosamine 1-carboxyvinyltransferase (417 aa).

22 to 23 (KN) provides a ligand contact to phosphoenolpyruvate. Residue Arg92 coordinates UDP-N-acetyl-alpha-D-glucosamine. Residue Cys116 is the Proton donor of the active site. At Cys116 the chain carries 2-(S-cysteinyl)pyruvic acid O-phosphothioketal. The UDP-N-acetyl-alpha-D-glucosamine site is built by Asp304 and Val326.

The protein belongs to the EPSP synthase family. MurA subfamily.

It is found in the cytoplasm. The catalysed reaction is phosphoenolpyruvate + UDP-N-acetyl-alpha-D-glucosamine = UDP-N-acetyl-3-O-(1-carboxyvinyl)-alpha-D-glucosamine + phosphate. It participates in cell wall biogenesis; peptidoglycan biosynthesis. Cell wall formation. Adds enolpyruvyl to UDP-N-acetylglucosamine. This is UDP-N-acetylglucosamine 1-carboxyvinyltransferase from Syntrophotalea carbinolica (strain DSM 2380 / NBRC 103641 / GraBd1) (Pelobacter carbinolicus).